Here is a 137-residue protein sequence, read N- to C-terminus: Small heat shock protein IbpA (137 aa).

The sHSP domain maps to 28–137 (TQSNGGYPPY…AMKPRRIEIK (110 aa)).

It belongs to the small heat shock protein (HSP20) family. Monomer. Forms homomultimers of about 100-150 subunits at optimal growth temperatures. Conformation changes to monomers at high temperatures or high ionic concentrations.

It is found in the cytoplasm. Functionally, associates with aggregated proteins, together with IbpB, to stabilize and protect them from irreversible denaturation and extensive proteolysis during heat shock and oxidative stress. Aggregated proteins bound to the IbpAB complex are more efficiently refolded and reactivated by the ATP-dependent chaperone systems ClpB and DnaK/DnaJ/GrpE. Its activity is ATP-independent. The chain is Small heat shock protein IbpA from Pectobacterium atrosepticum (strain SCRI 1043 / ATCC BAA-672) (Erwinia carotovora subsp. atroseptica).